A 237-amino-acid chain; its full sequence is Large ribosomal subunit protein bL25 (237 aa).

The interval 1–104 is N-terminal domain; the sequence is MELTAKPRTP…SVPVHTTGRS (104 aa). The middle domain stretch occupies residues 105 to 189; the sequence is QGEVQGGLVD…ELEAEVQAAQ (85 aa). The C-terminal domain stretch occupies residues 190-237; that stretch reads VAGLVAAGELSEEAAEAVLEGDASLEEVKAEASEDNAGTDSEDNSDAQ. The interval 205–237 is disordered; that stretch reads EAVLEGDASLEEVKAEASEDNAGTDSEDNSDAQ.

It belongs to the bacterial ribosomal protein bL25 family. CTC subfamily. As to quaternary structure, part of the 50S ribosomal subunit. Contacts proteins L11 and L16, the A site tRNA, and the 5S and 23S rRNAs.

Its function is as follows. This is one of 3 proteins that mediate the attachment of the 5S rRNA onto the large ribosomal subunit. This protein has three domains. The N-terminal one is bound on the solvent face, the middle domain fills the space between the 5S rRNA and the L11 arm contacting the 23S rRNA while the C-terminal domain is on the edge of the intersubunit interface and contacts the A site. The protein conformation changes upon binding of a tRNA mimic to the A site, although the mimic does not interact directly with CTC itself, consistent with CTCs presumed role in moderating A site binding. The sequence is that of Large ribosomal subunit protein bL25 (rplY) from Deinococcus radiodurans (strain ATCC 13939 / DSM 20539 / JCM 16871 / CCUG 27074 / LMG 4051 / NBRC 15346 / NCIMB 9279 / VKM B-1422 / R1).